Consider the following 226-residue polypeptide: ATP synthase F(0) complex subunit a (226 aa).

6 helical membrane passes run 6 to 26 (FASFITPMILGLPLVTLIVLF), 68 to 88 (WTLMLMSLILFIGSTNLLGLL), 97 to 117 (QLSMNLGMAISLWAGAVITGF), 138 to 158 (IPMLVIIETISLFIQPMALAV), 164 to 184 (ITAGHLLIHLIGGATLALMSI), and 200 to 222 (TILEFAVAMIQAYVFTLLVSLYL).

The protein belongs to the ATPase A chain family. Component of the ATP synthase complex composed at least of ATP5F1A/subunit alpha, ATP5F1B/subunit beta, ATP5MC1/subunit c (homooctomer), MT-ATP6/subunit a, MT-ATP8/subunit 8, ATP5ME/subunit e, ATP5MF/subunit f, ATP5MG/subunit g, ATP5MK/subunit k, ATP5MJ/subunit j, ATP5F1C/subunit gamma, ATP5F1D/subunit delta, ATP5F1E/subunit epsilon, ATP5PF/subunit F6, ATP5PB/subunit b, ATP5PD/subunit d, ATP5PO/subunit OSCP. ATP synthase complex consists of a soluble F(1) head domain (subunits alpha(3) and beta(3)) - the catalytic core - and a membrane F(0) domain - the membrane proton channel (subunits c, a, 8, e, f, g, k and j). These two domains are linked by a central stalk (subunits gamma, delta, and epsilon) rotating inside the F1 region and a stationary peripheral stalk (subunits F6, b, d, and OSCP). Interacts with DNAJC30; interaction is direct.

It localises to the mitochondrion inner membrane. It carries out the reaction H(+)(in) = H(+)(out). Subunit a, of the mitochondrial membrane ATP synthase complex (F(1)F(0) ATP synthase or Complex V) that produces ATP from ADP in the presence of a proton gradient across the membrane which is generated by electron transport complexes of the respiratory chain. ATP synthase complex consist of a soluble F(1) head domain - the catalytic core - and a membrane F(1) domain - the membrane proton channel. These two domains are linked by a central stalk rotating inside the F(1) region and a stationary peripheral stalk. During catalysis, ATP synthesis in the catalytic domain of F(1) is coupled via a rotary mechanism of the central stalk subunits to proton translocation. With the subunit c (ATP5MC1), forms the proton-conducting channel in the F(0) domain, that contains two crucial half-channels (inlet and outlet) that facilitate proton movement from the mitochondrial intermembrane space (IMS) into the matrix. Protons are taken up via the inlet half-channel and released through the outlet half-channel, following a Grotthuss mechanism. This Bos mutus grunniens (Wild yak) protein is ATP synthase F(0) complex subunit a.